A 111-amino-acid polypeptide reads, in one-letter code: Sulditoxin subunit B (111 aa).

A signal peptide spans 1 to 19; the sequence is MKTLLLALAVVVLVCLGSA. Residues 20 to 34 constitute a propeptide that is removed on maturation; the sequence is NELGLGRQQIDRGRR. Pyrrolidone carboxylic acid is present on Q35. Intrachain disulfides connect C44-C68, C47-C55, C61-C87, C91-C102, and C103-C108.

This sequence belongs to the three-finger toxin family. Ancestral subfamily. Boigatoxin sub-subfamily. As to quaternary structure, heterodimer of sulditoxin subunits A and B; probably disulfide-linked. In terms of tissue distribution, expressed by the venom gland.

Its subcellular location is the secreted. Its function is as follows. Reptile-specific neurotoxin (tested on geckos). Inhibits nicotinic acetylcholine receptor (nAChR). Not toxic to mammals (tested on mice). This Spilotes sulphureus (Amazon puffing snake) protein is Sulditoxin subunit B.